A 200-amino-acid chain; its full sequence is MFRKGKKRHSSSSSQSSEISTKSKSVDSSLGGLSRSSTVASLDTDSTKSSGQSNSNLDTCAEFRIKYVGAIEKLAVSEGKSLEGPLDLINYIDVAQQDGKLPFVPLEEEFILGVSKYGIKVSTTDQHGVLHRHALYLIIRMVCYDDGLGAGKSLLALKTTDASNEEYSLWVYQCNSLEQAQAICKVLSTAFDSVLTSDKS.

The segment covering Met1 to Ser10 has biased composition (basic residues). The segment at Met1–Ser55 is disordered. Positions Lys6–Lys7 match the Nuclear localization signal motif. Over residues Ser11–Ser29 the composition is skewed to low complexity. Over residues Ser34–Ser55 the composition is skewed to polar residues. Thr38 is subject to Phosphothreonine; by CaMK2. Ser41 is subject to Phosphoserine. One can recognise a PID domain in the interval Asp58 to Ser200. The segment at Tyr136–Ile139 is interaction with KRIT1. The interaction with ITGB1 stretch occupies residues Ile139–Met141.

As to quaternary structure, found in a complex, at least composed of ITGB1BP1, KRIT1 and RAP1A. Interacts (via C-terminal region) with ITGB1 (via C-terminal cytoplasmic tail); the interaction prevents talin TLN1 binding to ITGB1 and KRIT1 and ITGB1 compete for the same binding site. Interacts with KRIT1 (via N-terminal NPXY motif); the interaction induces the opening conformation of KRIT1 and KRIT1 and ITGB1 compete for the same binding site. Isoform 2 does not interact with ITGB1. Interacts with CDC42 (GTP- or GDP-bound form); the interaction is increased with the CDC42-membrane bound forms and prevents both CDC42 activation and cell spreading. Interacts (via C-terminal domain region) with NME2. Interacts with FERMT2 and RAC1. Interacts (via N-terminus and PTB domain) with ROCK1. Phosphorylation at Thr-38 seems to enhance integrin alpha5beta1-mediated cell adhesion. The degree of phosphorylation is regulated by integrin-dependent cell-matrix interaction. Expressed in the brain.

Its subcellular location is the nucleus. It localises to the cytoplasm. The protein localises to the cytoskeleton. It is found in the cell membrane. The protein resides in the cell projection. Its subcellular location is the lamellipodium. It localises to the ruffle. Functionally, key regulator of the integrin-mediated cell-matrix interaction signaling by binding to the ITGB1 cytoplasmic tail and preventing the activation of integrin alpha-5/beta-1 (heterodimer of ITGA5 and ITGB1) by talin or FERMT1. Plays a role in cell proliferation, differentiation, spreading, adhesion and migration in the context of mineralization and bone development and angiogenesis. Stimulates cellular proliferation in a fibronectin-dependent manner. Involved in the regulation of beta-1 integrin-containing focal adhesion (FA) site dynamics by controlling its assembly rate during cell adhesion; inhibits beta-1 integrin clustering within FA by directly competing with talin TLN1, and hence stimulates osteoblast spreading and migration in a fibronectin- and/or collagen-dependent manner. Acts as a guanine nucleotide dissociation inhibitor (GDI) by regulating Rho family GTPases during integrin-mediated cell matrix adhesion; reduces the level of active GTP-bound form of both CDC42 and RAC1 GTPases upon cell adhesion to fibronectin. Stimulates the release of active CDC42 from the membranes to maintain it in an inactive cytoplasmic pool. Participates in the translocation of the Rho-associated protein kinase ROCK1 to membrane ruffles at cell leading edges of the cell membrane, leading to an increase of myoblast cell migration on laminin. Plays a role in bone mineralization at a late stage of osteoblast differentiation; modulates the dynamic formation of focal adhesions into fibrillar adhesions, which are adhesive structures responsible for fibronectin deposition and fibrillogenesis. Plays a role in blood vessel development; acts as a negative regulator of angiogenesis by attenuating endothelial cell proliferation and migration, lumen formation and sprouting angiogenesis by promoting AKT phosphorylation and inhibiting ERK1/2 phosphorylation through activation of the Notch signaling pathway. Promotes transcriptional activity of the MYC promoter. This is Integrin beta-1-binding protein 1 (Itgb1bp1) from Mus musculus (Mouse).